A 718-amino-acid polypeptide reads, in one-letter code: Protein Hook homolog 3 (718 aa).

Residue methionine 1 is modified to N-acetylmethionine. The interval 1-164 (MFSVESLERA…QELMSKESPV (164 aa)) is sufficient for interaction with microtubules. 2 positions are modified to phosphoserine: serine 3 and serine 6. The Calponin-homology (CH) domain occupies 10 to 126 (AELCESLLTW…RMLQLILGCA (117 aa)). 2 coiled-coil regions span residues 167–433 (GNDA…VQAQ) and 462–667 (EIRE…YIVS). Serine 238 is subject to Phosphoserine. The segment at 553-718 (EKLHEANNEL…PGHVQPATAR (166 aa)) is required for association with Golgi. The segment at 556-718 (HEANNELQKK…PGHVQPATAR (163 aa)) is required for interaction with MSR1. The segment at 682 to 718 (EDRLASTGSGQSFLARQRQATSSRRSYPGHVQPATAR) is disordered. Serine 693 and serine 707 each carry phosphoserine. Residues 696–707 (ARQRQATSSRRS) are compositionally biased toward low complexity.

Belongs to the hook family. In terms of assembly, self-associates. Component of the FTS/Hook/FHIP complex (FHF complex), composed of AKTIP/FTS, FHIP1B, and one or more members of the Hook family of proteins HOOK1, HOOK2, and HOOK3. May interact directly with AKTIP/FTS, HOOK1 and HOOK2. Associates with several subunits of the homotypic vesicular sorting complex (the HOPS complex) including VPS16 and VPS41; these interactions may be indirect. Interacts with MSR1, and this association is stimulated by ligand binding to MSR1. Interacts with microtubules. Part of a tripartite complex with dynein and dynactin, acts an adapter linking the dynein motor complex and dynactin. Interacts with dynein intermediate chain and dynactin (DCTN1). Interacts with CCDC181. Interacts with LRGUK. As to quaternary structure, (Microbial infection) Interacts with Salmonella typhimurium spiC.

The protein localises to the cytoplasm. It is found in the cytoskeleton. It localises to the golgi apparatus. In terms of biological role, acts as an adapter protein linking the dynein motor complex to various cargos and converts dynein from a non-processive to a highly processive motor in the presence of dynactin. Facilitates the interaction between dynein and dynactin and activates dynein processivity (the ability to move along a microtubule for a long distance without falling off the track). Predominantly recruits 2 dyneins, which increases both the force and speed of the microtubule motor. Component of the FTS/Hook/FHIP complex (FHF complex). The FHF complex may function to promote vesicle trafficking and/or fusion via the homotypic vesicular protein sorting complex (the HOPS complex). May regulate clearance of endocytosed receptors such as MSR1. Participates in defining the architecture and localization of the Golgi complex. FHF complex promotes the distribution of AP-4 complex to the perinuclear area of the cell. Functionally, (Microbial infection) May serve as a target for the spiC protein from Salmonella typhimurium, which inactivates it, leading to a strong alteration in cellular trafficking. The polypeptide is Protein Hook homolog 3 (Homo sapiens (Human)).